The chain runs to 331 residues: MKVAENQKVYDITIIGGGPTGLFTAFYGGMRQASVKIIESLPQLGGQLSALYPEKYIYDVAGFPKVRAQELVDNLKEQMKKFDPTVCLEEAVDTLEKQADGIFKLVTNKQTHYSKSVIITAGNGAFQPRRLELEGTAKYEKKNLHYFVDDMNKFAGKRVVVFGGGDSAVDWTMMLEPIADKVTIVHRRDKFRAHEHSVESLMNSRAEVSTPYVPVELIGDDKIEQVVLQHVKTEEKIIIDVDDVIVNYGFVSSLGPIKNWGLDIQKNSILVNSKMETNIPGIYAAGDICTYEGKVKLIACGFGEAPTAVNNAKAYFDPNAKLQPMHSSSMF.

FAD contacts are provided by threonine 20, glutamate 39, glutamine 47, tyrosine 52, valine 92, phenylalanine 126, aspartate 287, and serine 328.

It belongs to the ferredoxin--NADP reductase type 2 family. Homodimer. Requires FAD as cofactor.

It carries out the reaction 2 reduced [2Fe-2S]-[ferredoxin] + NADP(+) + H(+) = 2 oxidized [2Fe-2S]-[ferredoxin] + NADPH. This chain is Ferredoxin--NADP reductase, found in Bacillus cereus (strain ZK / E33L).